A 796-amino-acid chain; its full sequence is Striatin-3 (796 aa).

At Met1 the chain carries N-acetylmethionine. The span at 1 to 13 (MDELAGGGGGGQG) shows a compositional bias: gly residues. The segment at 1–60 (MDELAGGGGGGQGMAAPPRPQQGPGGNLSLPPGANGAPGGGGPPAAEAAGPPAGPELSRP) is disordered. The segment at 71–79 (YIQHEWARF) is caveolin-binding. Positions 77–136 (ARFEMERAHWEVERAELQARIAFLQGERKGQENLKKDLVRRIKMLEYALKQERAKYHKLK) form a coiled coil. Position 150 is a phosphothreonine (Thr150). The interval 166–183 (QNSQLTWKQGRQLLRQYL) is calmodulin-binding. A phosphoserine mark is found at Ser202, Ser214, Ser229, Ser257, and Ser334. Disordered regions lie at residues 252 to 271 (ENADDSDEEENDMIEGIPEG) and 311 to 335 (EDGEGAGEARSSGDGTEWDKDDLSP). Residues 253–264 (NADDSDEEENDM) show a composition bias toward acidic residues. WD repeat units lie at residues 477-516 (SHFDGVRALAFHPVEPVLVTASEDHTLKLWNLQKTVPAKK), 530-569 (AHIGPVLSLAISSNGEQCFSGGIDATIQWWNMPSPNVDPY), 583-622 (AHTDAVWGLAYSGIKNQLLSCSADGTIRLWNPQEKLPCVC), 678-717 (QSSNHINRVVSHPTLPVTITAHEDRHIKFFDNKTGKMIHS), 720-759 (AHLDAVTSLAVDPNGIYLMSGSHDCSIRLWNLDSKTCVQE), and 766-795 (KLDESIYDVAFHPSKAYIASAGADALAKVF).

The protein belongs to the WD repeat striatin family. As to quaternary structure, tetramerizes. Part of the core of STRIPAK complexes composed of PP2A catalytic and scaffolding subunits, the striatins (PP2A regulatory subunits), the striatin-associated proteins MOB4, STRIP1 and STRIP2, PDCD10 and members of the STE20 kinases, such as STK24 and STK26. The STRIPAK complex can be extended by adapter proteins such as SLMAP:SIKE1 or CTTNBP2NL. Interacts with CDC42BPB. In terms of tissue distribution, mainly expressed in the brain and muscles but is also detected at low levels in various tissues such as kidney, spleen and lung.

It is found in the cytoplasm. Its subcellular location is the membrane. Calmodulin-binding scaffolding protein which is the center of the striatin-interacting phosphatase and kinase (STRIPAK) complexes. STRIPAK complexes have critical roles in protein (de)phosphorylation and are regulators of multiple signaling pathways including Hippo, MAPK, nuclear receptor and cytoskeleton remodeling. Different types of STRIPAK complexes are involved in a variety of biological processes such as cell growth, differentiation, apoptosis, metabolism and immune regulation. This Mus musculus (Mouse) protein is Striatin-3 (Strn3).